The sequence spans 357 residues: DNA replication and repair protein RecF (357 aa).

30 to 37 (GANGSGKT) serves as a coordination point for ATP.

This sequence belongs to the RecF family.

Its subcellular location is the cytoplasm. In terms of biological role, the RecF protein is involved in DNA metabolism; it is required for DNA replication and normal SOS inducibility. RecF binds preferentially to single-stranded, linear DNA. It also seems to bind ATP. In Escherichia coli O6:K15:H31 (strain 536 / UPEC), this protein is DNA replication and repair protein RecF.